The sequence spans 243 residues: 2-C-methyl-D-erythritol 4-phosphate cytidylyltransferase (243 aa).

This sequence belongs to the IspD/TarI cytidylyltransferase family. IspD subfamily.

The enzyme catalyses 2-C-methyl-D-erythritol 4-phosphate + CTP + H(+) = 4-CDP-2-C-methyl-D-erythritol + diphosphate. Its pathway is isoprenoid biosynthesis; isopentenyl diphosphate biosynthesis via DXP pathway; isopentenyl diphosphate from 1-deoxy-D-xylulose 5-phosphate: step 2/6. Functionally, catalyzes the formation of 4-diphosphocytidyl-2-C-methyl-D-erythritol from CTP and 2-C-methyl-D-erythritol 4-phosphate (MEP). This Rhodopirellula baltica (strain DSM 10527 / NCIMB 13988 / SH1) protein is 2-C-methyl-D-erythritol 4-phosphate cytidylyltransferase.